The sequence spans 39 residues: Cecropin (39 aa).

The protein resides in the secreted. Its function is as follows. Antibacterial peptide active against Gram-negative bacterium E.coli. Has no activity against Gram-positive bacterium M.luteus. Weakly active against M.luteus. The chain is Cecropin from Calliphora vicina (Blue blowfly).